The sequence spans 131 residues: Hypocretin neuropeptide precursor (131 aa).

Q34 is subject to Pyrrolidone carboxylic acid. 2 cysteine pairs are disulfide-bonded: C39–C45 and C40–C47. Position 66 is a leucine amide (L66). The tract at residues 104–131 is disordered; that stretch reads EPALRPCSGRRCPSEAASSVAPGGRSGV.

It belongs to the orexin family.

Its subcellular location is the rough endoplasmic reticulum. The protein resides in the cytoplasmic vesicle. It is found in the synapse. Neuropeptides that play a significant role in the regulation of food intake and sleep-wakefulness, possibly by coordinating the complex behavioral and physiologic responses of these complementary homeostatic functions. A broader role in the homeostatic regulation of energy metabolism, autonomic function, hormonal balance and the regulation of body fluids, is also suggested. Functionally, binds to orexin receptors HCRTR1/OX1R and HCRTR2/OX2R with a high affinity. Stimulates food intake. Modulates pituitary luteinizing hormone secretion in an ovarian steroid-dependent manner. In terms of biological role, binds to orexin receptor HCRTR2/OX2R only. Stimulates food intake. Modulates pituitary luteinizing hormone secretion in an ovarian steroid-dependent manner. This Bos taurus (Bovine) protein is Hypocretin neuropeptide precursor (HCRT).